We begin with the raw amino-acid sequence, 164 residues long: Protein-export protein SecB (164 aa).

The protein belongs to the SecB family. In terms of assembly, homotetramer, a dimer of dimers. One homotetramer interacts with 1 SecA dimer.

It localises to the cytoplasm. One of the proteins required for the normal export of preproteins out of the cell cytoplasm. It is a molecular chaperone that binds to a subset of precursor proteins, maintaining them in a translocation-competent state. It also specifically binds to its receptor SecA. The polypeptide is Protein-export protein SecB (Pseudomonas syringae pv. tomato (strain ATCC BAA-871 / DC3000)).